The primary structure comprises 642 residues: MYPASPPAGPALHPVPHRARLPQPRCLAEPPRSPAPGPGSTARPPPPPAPGPRPRVAVKMTFRKAYSIKDKLQAIERVKGGERQASVCRDFGVPGGTLRGWLKDEPKLRWFLDQLGGEVGTQRKKMRLANEEEIDRAVYSWFLTLRQHGVPLSGPVIQAQAEAFARQIYGPECTFKASHGWFWRWQKRHGISSQRIYGEAESPVAGPAPVKEEPAQSPGAVLVPDGAPATLPHSEGGYGDEQIYNANVTGLYWRLLPEQASTPGTGDSKEPGGCSRRWRSDRVTVLLAANLTGSHKLKPLVIGQLPDPPSLRHHNQDKFPASYRYSPDAWLSRPLLRGWFFEEFVPGVKRYLRRSCLQQKAVLLVAHPPCPSWATSMPPLEESEETPRQCQPELLGSPEELQTPDGAVRVLFLSKGTSRAHIPAPLEHGVVAAFKHLYKRELLRLAVSCASGSPLDFMRSFVLKDMLYLAGLSWDLVQAGSIERCWLLGLRAAFEPGQQPAHQVEETAEHSRVLSDLTHLAALAYKRLAPEEVAQWLHLDDDGGLPEGCREEVAPAAPPSPASLPSSIGAGEEEEEATEQGGVLVPTAGEAVWGLETALRWLESQDPREVGPLRLVQLRSLITMARRLGGIGPSAVTSDDGV.

The segment at 1–54 (MYPASPPAGPALHPVPHRARLPQPRCLAEPPRSPAPGPGSTARPPPPPAPGPRP) is disordered. The span at 31-53 (PRSPAPGPGSTARPPPPPAPGPR) shows a compositional bias: pro residues. In terms of domain architecture, HTH psq-type spans 57-108 (AVKMTFRKAYSIKDKLQAIERVKGGERQASVCRDFGVPGGTLRGWLKDEPKL). 2 consecutive DNA-binding regions (H-T-H motif) follow at residues 84-104 (QASV…WLKD) and 155-188 (PVIQ…WQKR). In terms of domain architecture, HTH CENPB-type spans 122–195 (QRKKMRLANE…QKRHGISSQR (74 aa)). The disordered stretch occupies residues 202-238 (SPVAGPAPVKEEPAQSPGAVLVPDGAPATLPHSEGGY). Positions 240–365 (DEQIYNANVT…CLQQKAVLLV (126 aa)) constitute a DDE-1 domain. Disordered regions lie at residues 375-400 (TSMP…SPEE) and 548-581 (GCRE…TEQG).

It belongs to the tigger transposable element derived protein family.

It localises to the nucleus. This Mus musculus (Mouse) protein is Tigger transposable element derived 5 (Tigd5).